Consider the following 34-residue polypeptide: Hemopexin (34 aa).

The interval 1-25 (RPLTQHKPHTPGDEHPHGAEPPGXD) is disordered.

It belongs to the hemopexin family. As to expression, expressed by the liver and secreted in plasma.

The protein localises to the secreted. Its function is as follows. Binds heme and transports it to the liver for breakdown and iron recovery, after which the free hemopexin returns to the circulation. This chain is Hemopexin (HPX), found in Gallus gallus (Chicken).